The following is a 55-amino-acid chain: Neurotoxin B-IV (55 aa).

At Pro-10 the chain carries Hydroxyproline. Intrachain disulfides connect Cys-12-Cys-52, Cys-16-Cys-48, Cys-23-Cys-41, and Cys-26-Cys-37.

It belongs to the worm B-toxin family.

The protein localises to the secreted. In terms of biological role, this toxin increases the excitability of nerves by delaying the inactivation of the voltage-gated sodium channel (Nav). Only acts on some crustacean. Is more abundant, but 15-fold less toxic than neurotoxin B-II. The polypeptide is Neurotoxin B-IV (Cerebratulus lacteus (Milky ribbon worm)).